The primary structure comprises 357 residues: O-methyltransferase 1, chloroplastic (357 aa).

Residues 1-53 constitute a chloroplast transit peptide; it reads MPVLPWLAAAATTPVRRSPPLPATPRALLRLPASSFPPWSNCAKSGLPPRGPF. The interval 50–71 is disordered; the sequence is RGPFATAADTPLGGSLPEPEEE.

Belongs to the methyltransferase superfamily. LCMT family. Expressed in roots, leaf sheaths, flag leaves and panicles.

The protein localises to the plastid. It is found in the chloroplast. The enzyme catalyses N-acetylserotonin + S-adenosyl-L-methionine = melatonin + S-adenosyl-L-homocysteine + H(+). The protein operates within aromatic compound metabolism; melatonin biosynthesis; melatonin from serotonin: step 1/2. In terms of biological role, involved in melatonin biosynthesis. Can function as acetylserotonin O-methyltransferase. Catalyzes the transfer of a methyl group onto N-acetylserotonin, producing melatonin (N-acetyl-5-methoxytryptamine). Involved in the regulation of jasmonate- and brassinosteroid-mediated plant growth and defense responses. The chain is O-methyltransferase 1, chloroplastic from Oryza sativa subsp. japonica (Rice).